The sequence spans 341 residues: MIRDEIPISAQVLQWRCVESRVDSARLHYSRFAISPFRSGQASTVGIAMRRALLGEVEGTCITCAEFKRVTHEYSTILGIQESVHDVLINLGEIVLRSDSYETQKAFISILGPKKVTAQDIILPPSVKIIDTTQYIATVTKAIHLDIELKIEKDFGYRIEDPIKSADGNFPVDAVFMPIRNVNYSVHSFENGNETQEILFLEIWTNGSVTPKEALYEASRSLINLFIPFLHAEKKEFIYGLKNTYESNMSYFSSPSLSADIDEMTKGVTFKHIFIDQLELPARAYNCLKRVNAHTISDLLNYSQDDLMKIKNFGKKSVEQVLEALQKRFSINLPKNKLHFH.

The segment at 1-233 (MIRDEIPISA…NLFIPFLHAE (233 aa)) is alpha N-terminal domain (alpha-NTD). The alpha C-terminal domain (alpha-CTD) stretch occupies residues 265 to 341 (TKGVTFKHIF…NLPKNKLHFH (77 aa)).

The protein belongs to the RNA polymerase alpha chain family. In plastids the minimal PEP RNA polymerase catalytic core is composed of four subunits: alpha, beta, beta', and beta''. When a (nuclear-encoded) sigma factor is associated with the core the holoenzyme is formed, which can initiate transcription.

Its subcellular location is the plastid. It is found in the chloroplast. It catalyses the reaction RNA(n) + a ribonucleoside 5'-triphosphate = RNA(n+1) + diphosphate. In terms of biological role, DNA-dependent RNA polymerase catalyzes the transcription of DNA into RNA using the four ribonucleoside triphosphates as substrates. The sequence is that of DNA-directed RNA polymerase subunit alpha from Takakia lepidozioides (Moss).